The sequence spans 132 residues: Fatty acid-binding protein, intestinal (132 aa).

An N-acetylalanine modification is found at A2. Hexadecanoate contacts are provided by W83 and R107. The tetradecanoate site is built by W83 and R107.

This sequence belongs to the calycin superfamily. Fatty-acid binding protein (FABP) family.

Its subcellular location is the cytoplasm. FABPs are thought to play a role in the intracellular transport of long-chain fatty acids and their acyl-CoA esters. This chain is Fatty acid-binding protein, intestinal (fabp2), found in Xenopus laevis (African clawed frog).